The primary structure comprises 363 residues: MNKLALYCRIGFEKETAAEITEKAAEKGVFGFARVNNDSGYVIFECYQEGEADRLAREIPFNQLIFARQMIVISDLLENLPPTDRITPIIEEYNRIGSLVNLHRTTELFVETADTNEAKELSVFCRKFTVPLRQALKKQGYLAFKEVKKSGLTLHIFFVKPNCCYVGYSYNNNHSPNFMGILRLKFPPQAPSRSTLKLHEAILTFLSPEEERKCMNESMYGVDLGACPGGWTYQLVKRGLFVYAVDHGKMAASLHDTGRIDHCPEDGFKFQPPKRSKIDWLVCDMVEQPIRIAALIAKWLVNEWCRESIFNLKLPMKKRYAEVQNCLQLITNELDKAGFKYHIQAKHLYHDREEITVHISVKK.

S-adenosyl-L-methionine is bound by residues serine 194, 227 to 230 (CPGG), aspartate 246, aspartate 266, and aspartate 284. The Proton acceptor role is filled by lysine 313.

It belongs to the class I-like SAM-binding methyltransferase superfamily. RNA methyltransferase RlmE family. RlmM subfamily. In terms of assembly, monomer.

It is found in the cytoplasm. The enzyme catalyses cytidine(2498) in 23S rRNA + S-adenosyl-L-methionine = 2'-O-methylcytidine(2498) in 23S rRNA + S-adenosyl-L-homocysteine + H(+). In terms of biological role, catalyzes the 2'-O-methylation at nucleotide C2498 in 23S rRNA. This is Ribosomal RNA large subunit methyltransferase M from Mannheimia succiniciproducens (strain KCTC 0769BP / MBEL55E).